Here is a 492-residue protein sequence, read N- to C-terminus: Beta-Ala-His dipeptidase (492 aa).

A Zn(2+)-binding site is contributed by His-107. Residue Asp-109 is part of the active site. Asp-140 is a Zn(2+) binding site. Glu-174 (proton acceptor) is an active-site residue. Glu-175 is a binding site for Zn(2+). Position 194 is a phosphoserine (Ser-194). Residues Asp-203 and His-453 each contribute to the Zn(2+) site.

This sequence belongs to the peptidase M20A family. As to quaternary structure, homodimer. Zn(2+) is required as a cofactor. In terms of tissue distribution, detected exclusively in kidney.

It is found in the secreted. It catalyses the reaction Preferential hydrolysis of the beta-Ala-|-His dipeptide (carnosine), and also anserine, Xaa-|-His dipeptides and other dipeptides including homocarnosine.. The enzyme catalyses carnosine + H2O = beta-alanine + L-histidine. It carries out the reaction anserine + H2O = N(pros)-methyl-L-histidine + beta-alanine. The catalysed reaction is L-alanyl-L-histidine + H2O = L-histidine + L-alanine. It catalyses the reaction glycyl-L-histidine + H2O = L-histidine + glycine. The enzyme catalyses L-homocarnosine + H2O = 4-aminobutanoate + L-histidine. Catalyzes the peptide bond hydrolysis in Xaa-His dipeptides, displaying the highest activity toward carnosine (beta-alanyl-L-histidine) and anserine (beta-alanyl-3-methyl-histidine). This Rattus norvegicus (Rat) protein is Beta-Ala-His dipeptidase (Cndp1).